A 91-amino-acid polypeptide reads, in one-letter code: Large ribosomal subunit protein uL23 (91 aa).

The protein belongs to the universal ribosomal protein uL23 family. In terms of assembly, part of the 50S ribosomal subunit. Contacts protein L29, and trigger factor when it is bound to the ribosome.

One of the early assembly proteins it binds 23S rRNA. One of the proteins that surrounds the polypeptide exit tunnel on the outside of the ribosome. Forms the main docking site for trigger factor binding to the ribosome. In Staphylococcus aureus (strain USA300), this protein is Large ribosomal subunit protein uL23.